A 381-amino-acid chain; its full sequence is MMSNLPLDLVEEILSRVPATSLKRLRSTCKSWNNCYKDQRFTEKHSVIAAKQFLVLMLKDCRVSSVSVNLNEIHNNIAAPSIELKGVVGPQMQISGIFHCDGLLLCTTKDDRLEVWNPCTGQTRRVQHSIHYKTNSEFVLGYVNNNSRHSYKILRYWNFYMSNYRVSEFEIYDFSSDSWRFIDEVNPYCLTEGEVSLKGNTYWLASDEKRDIDLILRFDFSIERYQRLNLPILKSDYETEALSVVREKQLSVLLKRNDTLEREIWVTTNDKIDHTTKNLLWIKFLAIDQRTCYHWSCVSFFIDEEKKMAVFCDGYIGGINETSRRMFYIIGEDKYYRELYVGDSPIRSHRPFVFNYVPSLVQIPQATVIPKRRRRKRKNRN.

Positions 1 to 45 constitute an F-box domain; that stretch reads MMSNLPLDLVEEILSRVPATSLKRLRSTCKSWNNCYKDQRFTEKH.

This is Putative F-box protein At3g17500 from Arabidopsis thaliana (Mouse-ear cress).